The chain runs to 250 residues: 2,3-bisphosphoglycerate-dependent phosphoglycerate mutase (250 aa).

Residues 10 to 17 (RHGESQWN), 23 to 24 (TG), arginine 62, 89 to 92 (ERHY), lysine 100, 116 to 117 (RR), and 185 to 186 (GN) contribute to the substrate site. Histidine 11 (tele-phosphohistidine intermediate) is an active-site residue. Glutamate 89 serves as the catalytic Proton donor/acceptor.

Belongs to the phosphoglycerate mutase family. BPG-dependent PGAM subfamily. Homodimer.

The enzyme catalyses (2R)-2-phosphoglycerate = (2R)-3-phosphoglycerate. It functions in the pathway carbohydrate degradation; glycolysis; pyruvate from D-glyceraldehyde 3-phosphate: step 3/5. In terms of biological role, catalyzes the interconversion of 2-phosphoglycerate and 3-phosphoglycerate. This is 2,3-bisphosphoglycerate-dependent phosphoglycerate mutase from Escherichia coli O139:H28 (strain E24377A / ETEC).